Here is a 220-residue protein sequence, read N- to C-terminus: Octanoyltransferase (220 aa).

In terms of domain architecture, BPL/LPL catalytic spans 27–208 (PGTADEIWLC…QLARAHGQAV (182 aa)). Substrate is bound by residues 66–73 (RGGQVTYH), 139–141 (ALG), and 152–154 (GLA). Residue cysteine 170 is the Acyl-thioester intermediate of the active site.

Belongs to the LipB family.

It is found in the cytoplasm. The catalysed reaction is octanoyl-[ACP] + L-lysyl-[protein] = N(6)-octanoyl-L-lysyl-[protein] + holo-[ACP] + H(+). Its pathway is protein modification; protein lipoylation via endogenous pathway; protein N(6)-(lipoyl)lysine from octanoyl-[acyl-carrier-protein]: step 1/2. Catalyzes the transfer of endogenously produced octanoic acid from octanoyl-acyl-carrier-protein onto the lipoyl domains of lipoate-dependent enzymes. Lipoyl-ACP can also act as a substrate although octanoyl-ACP is likely to be the physiological substrate. In Bordetella pertussis (strain Tohama I / ATCC BAA-589 / NCTC 13251), this protein is Octanoyltransferase.